Consider the following 445-residue polypeptide: Histidine--tRNA ligase (445 aa).

It belongs to the class-II aminoacyl-tRNA synthetase family. In terms of assembly, homodimer.

The protein resides in the cytoplasm. The enzyme catalyses tRNA(His) + L-histidine + ATP = L-histidyl-tRNA(His) + AMP + diphosphate + H(+). This is Histidine--tRNA ligase from Mycoplasma mobile (strain ATCC 43663 / 163K / NCTC 11711) (Mesomycoplasma mobile).